A 656-amino-acid polypeptide reads, in one-letter code: NADH-ubiquinone oxidoreductase chain 5 (656 aa).

Transmembrane regions (helical) follow at residues 4–21 (TLIILPLLGSIVSGFFGR), 28–50 (AHLITCVSVITTTFLAILAFFEV), 81–103 (LTVSMFITVLIVSSLVHIYSISY), 112–129 (RFFSYLSLFTFMMIILVT), 133–155 (YLIMFVGWEGVGVCSYLLVNFWF), 176–198 (TLLTVGMFAILWSFGNIDYSTVF), 208–230 (IITIIGICLLIGATAKSSQVGLH), 243–262 (VSALIHAATMVTAGVYLLMR), 272–294 (TVLVLCLWLGAITTVFSSLIGLF), 301–319 (VIAYSTMSQLGMMVIAVGL), 329–351 (LVNHAFYKALLFLGAGSVIHAVA), 364–386 (EFLPLTYSVMLIASLSLVAVPFM), 409–431 (IVYFVATIGAMFTTLYSAKVLYL), 452–471 (LFMTIPLIILAIFSIFFGYL), 514–536 (FVFTVSLSLLSVLLSEFLPKLLI), 603–625 (SLGNLSTGIVTTYALYILIGLIF), and 629–651 (LLYFSYNDNNLLILIIFTLFALL).

The protein belongs to the complex I subunit 5 family.

It localises to the mitochondrion inner membrane. It catalyses the reaction a ubiquinone + NADH + 5 H(+)(in) = a ubiquinol + NAD(+) + 4 H(+)(out). Functionally, core subunit of the mitochondrial membrane respiratory chain NADH dehydrogenase (Complex I) that is believed to belong to the minimal assembly required for catalysis. Complex I functions in the transfer of electrons from NADH to the respiratory chain. The immediate electron acceptor for the enzyme is believed to be ubiquinone. The sequence is that of NADH-ubiquinone oxidoreductase chain 5 (nad5) from Aspergillus niger.